Reading from the N-terminus, the 152-residue chain is MAERTHFMELALVEARSAGERDEVPIGAVLVLDGRVIARSGNRTRELNDVTAHAEIAVIRMACEALGQERLPGADLYVTLEPCTMCAAAISFARIRRLYYGAQDPKGGAVESGVRFFSQPTCHHAPDVYSGLAESESAEILRQFFREKRLDD.

Residues Ala-2–Glu-111 form the CMP/dCMP-type deaminase domain. His-53 serves as a coordination point for Zn(2+). Residue Glu-55 is the Proton donor of the active site. Positions 83 and 86 each coordinate Zn(2+).

The protein belongs to the cytidine and deoxycytidylate deaminase family. Homodimer. Zn(2+) is required as a cofactor.

It catalyses the reaction adenosine(34) in tRNA + H2O + H(+) = inosine(34) in tRNA + NH4(+). Functionally, catalyzes the deamination of adenosine to inosine at the wobble position 34 of tRNA(Arg2). The sequence is that of tRNA-specific adenosine deaminase from Agrobacterium fabrum (strain C58 / ATCC 33970) (Agrobacterium tumefaciens (strain C58)).